Consider the following 212-residue polypeptide: Thymidine kinase (212 aa).

ATP contacts are provided by residues 16–23 (GPMFSGKS) and 99–102 (DEAQ). Residue Glu-100 is the Proton acceptor of the active site.

The protein belongs to the thymidine kinase family. Homotetramer.

Its subcellular location is the cytoplasm. The catalysed reaction is thymidine + ATP = dTMP + ADP + H(+). The protein is Thymidine kinase of Deinococcus radiodurans (strain ATCC 13939 / DSM 20539 / JCM 16871 / CCUG 27074 / LMG 4051 / NBRC 15346 / NCIMB 9279 / VKM B-1422 / R1).